A 452-amino-acid polypeptide reads, in one-letter code: Probable glycine dehydrogenase (decarboxylating) subunit 1 (452 aa).

The protein belongs to the GcvP family. N-terminal subunit subfamily. As to quaternary structure, the glycine cleavage system is composed of four proteins: P, T, L and H. In this organism, the P 'protein' is a heterodimer of two subunits.

The enzyme catalyses N(6)-[(R)-lipoyl]-L-lysyl-[glycine-cleavage complex H protein] + glycine + H(+) = N(6)-[(R)-S(8)-aminomethyldihydrolipoyl]-L-lysyl-[glycine-cleavage complex H protein] + CO2. Its function is as follows. The glycine cleavage system catalyzes the degradation of glycine. The P protein binds the alpha-amino group of glycine through its pyridoxal phosphate cofactor; CO(2) is released and the remaining methylamine moiety is then transferred to the lipoamide cofactor of the H protein. This chain is Probable glycine dehydrogenase (decarboxylating) subunit 1, found in Nitrosospira multiformis (strain ATCC 25196 / NCIMB 11849 / C 71).